The primary structure comprises 285 residues: Orotidine 5'-phosphate decarboxylase (285 aa).

Substrate-binding positions include Asp40, 62–64 (KTH), 93–102 (DRKFVDIGST), Tyr235, and Arg253. Lys95 acts as the Proton donor in catalysis.

This sequence belongs to the OMP decarboxylase family.

It carries out the reaction orotidine 5'-phosphate + H(+) = UMP + CO2. The protein operates within pyrimidine metabolism; UMP biosynthesis via de novo pathway; UMP from orotate: step 2/2. In Paracoccidioides brasiliensis, this protein is Orotidine 5'-phosphate decarboxylase (URA3).